A 127-amino-acid chain; its full sequence is Fluoride-specific ion channel FluC (127 aa).

The next 3 helical transmembrane spans lie at 37-57 (TSFVNIAGSLAMGLLAGWLAL), 68-88 (LFLATGVLGGFTTFSAFSLEV), and 102-122 (LYAGVSVLLGVSALFIGLWMA). The Na(+) site is built by Gly-76 and Thr-79.

The protein belongs to the fluoride channel Fluc/FEX (TC 1.A.43) family.

The protein resides in the cell inner membrane. It carries out the reaction fluoride(in) = fluoride(out). With respect to regulation, na(+) is not transported, but it plays an essential structural role and its presence is essential for fluoride channel function. In terms of biological role, fluoride-specific ion channel. Important for reducing fluoride concentration in the cell, thus reducing its toxicity. In Hyphomonas neptunium (strain ATCC 15444), this protein is Fluoride-specific ion channel FluC.